The following is a 136-amino-acid chain: Large ribosomal subunit protein uL16c (136 aa).

Belongs to the universal ribosomal protein uL16 family. As to quaternary structure, part of the 50S ribosomal subunit.

It localises to the plastid. The protein localises to the chloroplast. This chain is Large ribosomal subunit protein uL16c, found in Chlamydomonas sp. (strain WXM).